The chain runs to 947 residues: Valine--tRNA ligase (947 aa).

Residues 45 to 55 (PNVTGSLHMGH) carry the 'HIGH' region motif. The 'KMSKS' region motif lies at 591–595 (KMSKS). Lys594 contacts ATP.

It belongs to the class-I aminoacyl-tRNA synthetase family. ValS type 1 subfamily. In terms of assembly, monomer.

It is found in the cytoplasm. The catalysed reaction is tRNA(Val) + L-valine + ATP = L-valyl-tRNA(Val) + AMP + diphosphate. Catalyzes the attachment of valine to tRNA(Val). As ValRS can inadvertently accommodate and process structurally similar amino acids such as threonine, to avoid such errors, it has a 'posttransfer' editing activity that hydrolyzes mischarged Thr-tRNA(Val) in a tRNA-dependent manner. The chain is Valine--tRNA ligase from Rhizobium meliloti (strain 1021) (Ensifer meliloti).